Consider the following 3739-residue polypeptide: Cardiomyopathy-associated protein 5 (3739 aa).

Disordered regions lie at residues 1-205, 268-814, 835-884, 967-1270, 1288-1313, 1325-1637, 1650-1969, 1986-2016, 2065-2246, 2273-2318, 2377-2498, 2513-2532, and 2579-2616; these read MESG…PPIT, SLEP…SAFV, VSVS…AIQS, LSED…SDVP, TQASLEPEAEDLVPPPTSGWEKRDAK, SSAL…NLVS, EMNR…EKGK, SSIPDSKVSDNEDLETRPGPSVEKAVPAIEP, FLSN…WETR, AVGE…LALD, VYPE…SAVE, KKQETWSDRPTVHTFQTSKD, and SADGVPPMGGTAQEPEGTSVKDEEFSVTSKPAGLSEDQ. The span at 18-47 shows a compositional bias: acidic residues; it reads ADEEVAQELETEEESEGEGEETAAESEEEP. Positions 48 to 62 are enriched in basic and acidic residues; that stretch reads DARLSDEDEEGKTKQ. A compositionally biased stretch (polar residues) spans 84 to 106; sequence TWETNSSRSSTPWASGESQTSGI. Residues 130-153 are compositionally biased toward basic residues; that stretch reads RTRKRTQKSKRGSPSLRRKGSKKR. Ser-155 is modified (phosphoserine). 2 stretches are compositionally biased toward polar residues: residues 156–175 and 325–336; these read LESQDVLTNQEDGPSISESP and ADSNLNVPSSTE. A coiled-coil region spans residues 380–406; sequence ATMVLERAKEELEQNAQGKESSEDDAS. Basic and acidic residues-rich tracts occupy residues 479 to 637, 644 to 663, and 670 to 730; these read IVHR…REEE, SIVHREEEHAPEPIVHREEE, and SIVH…ERGV. 2 repeat units span residues 482–493 and 494–505. Residues 482–720 form a 20 X 12 AA approximate tandem repeats of R-[DE]-[EK]-[EG]-H-[AV]-P-E-[PS]-[IM]-V-[HLR] region; the sequence is REEEHAPEPI…EEHAPEPMVH (239 aa). The 3; approximate repeat unit spans residues 506–519; sequence REEEHAPEPESIVH. Repeat unit 4 spans residues 520 to 531; the sequence is REEEHAPESIVH. The stretch at 532-545 is one 5; approximate repeat; sequence REEEHAPEPVPIVH. The 6; approximate repeat unit spans residues 546–559; that stretch reads REEEHAPEPESIVH. 4 tandem repeats follow at residues 560–571, 572–583, 584–595, and 596–607. The stretch at 608–621 is one 11; approximate repeat; sequence REEEHVPEPESIVR. The stretch at 622–633 is one 12; approximate repeat; that stretch reads KGEEHAPEPIVH. One copy of the 14; approximate repeat lies at 634-647; sequence REEEQVPEPESIVH. Repeat 15 spans residues 648 to 659; it reads REEEHAPEPIVH. One copy of the 16; approximate repeat lies at 660–673; the sequence is REEEQVPEPESIVH. 4 repeat units span residues 674 to 685, 686 to 696, 697 to 708, and 709 to 720. Positions 740–756 are enriched in acidic residues; it reads TEPEDSSLEEEIIELDY. Position 850 is a phosphoserine (Ser-850). Polar residues-rich tracts occupy residues 861-884 and 1151-1161; these read PAMTSVSEQSLSPSTTEKTSAIQS and CLTSPSEQTVL. 2 stretches are compositionally biased toward basic and acidic residues: residues 1188–1197 and 1230–1242; these read AETEQNKVEP and EHSEPSQEREESS. Residues 1337–1351 show a composition bias toward polar residues; sequence TSVLPTSQPSVSPES. 2 stretches are compositionally biased toward basic and acidic residues: residues 1441–1460 and 1476–1486; these read LEQRMLSKNEPEVAKPHSPP and TEVKQESKITR. The span at 1522–1540 shows a compositional bias: polar residues; that stretch reads ASSSATTVPVTKLDSNSTK. Basic and acidic residues-rich tracts occupy residues 1620-1631, 1697-1706, 1726-1742, 1760-1770, 1786-1803, and 1836-1850; these read NDKHEEITRSPD, IDSRDRDRSL, GPAELQRRGKEQEENRK, IEQKEPKRTLH, DKPELGVKQLAEKKENLE, and EKPDGLVNQHEDRKP. A compositionally biased stretch (polar residues) spans 1854–1863; that stretch reads QLESSESTDL. Basic and acidic residues-rich tracts occupy residues 1874–1885, 1896–1916, 1992–2001, and 2153–2165; these read DTDHTSETRNQE, LSQEPRRVQSKAVDDSEEGRK, KVSDNEDLET, and ARKEEPSSDHKET. Over residues 2181 to 2190 the composition is skewed to polar residues; that stretch reads KSAQSAFTRM. Position 2192 is a phosphoserine (Ser-2192). Basic and acidic residues-rich tracts occupy residues 2212–2244, 2279–2299, 2306–2318, 2377–2419, and 2429–2448; these read GEDRLRQEMPKPTSLEHCEEEVERPTEEKDGWE, RMPESRPFKLEESKAAERLEQ, KLMEKPSKTLALD, VYPE…ETDG, and ELEKSGESRVDLKEERRRFV. Ser-2411 is subject to Phosphoserine. Ser-2495 carries the post-translational modification Phosphoserine. Residues 2513–2523 are compositionally biased toward basic and acidic residues; sequence KKQETWSDRPT. A coiled-coil region spans residues 2640-2664; sequence SVDQEESEQMQDKLQYLEEKASFKS. 6 disordered regions span residues 2667-2725, 2742-2773, 2791-2835, 2881-2959, 3027-3047, and 3111-3174; these read VHDE…QPTV, LSPGSGKQKSTVEESSEEATKTLTSFPESSAE, GPEK…GMPL, EKNE…EREI, LESEPSSQGNEAGNASPDVNL, and PEEP…QKEP. Over residues 2682-2709 the composition is skewed to basic and acidic residues; sequence SKLEVPDRKITSLKENKTKETHKTKEEI. The interval 2731–3041 is required for RYR2 clustering; the sequence is YFEKYTLIDY…SSQGNEAGNA (311 aa). Over residues 2762 to 2773 the composition is skewed to polar residues; sequence KTLTSFPESSAE. Basic and acidic residues-rich tracts occupy residues 2791–2804 and 2812–2828; these read GPEKDDSKLSHAEM and KPDDRNAPKGISRDVDS. Ser-2905 carries the phosphoserine modification. Positions 2918 to 2929 are enriched in basic and acidic residues; sequence YILKDDILHDES. A compositionally biased stretch (polar residues) spans 3030 to 3047; it reads EPSSQGNEAGNASPDVNL. The span at 3153 to 3162 shows a compositional bias: basic and acidic residues; that stretch reads VWDRTEDQSA. An amphipathic helix H1 region spans residues 3187–3214; sequence KSLVSEMDKALDIHKDHEVSALDTAISA. The segment at 3215-3342 is B-box coiled-coil; BBC; it reads VKVQLGEFLE…ERLLSAMEST (128 aa). Residues 3244–3323 are a coiled coil; sequence FNTIEEKCSK…REAEELDETV (80 aa). The amphipathic helix H2 stretch occupies residues 3301–3318; that stretch reads SMDTAKDTLETIVREAEE. Fibronectin type-III domains lie at 3374-3475 and 3476-3568; these read VPQP…TAPS and TPVI…TRGT. The segment at 3421–3437 is amphipathic helix H3; sequence EINELVEEYRLTVKESC. Positions 3550-3735 constitute a B30.2/SPRY domain; that stretch reads NASGTSEQSE…LHLGLEPPDS (186 aa).

Interacts with PRKAR2A. Interacts with ACTN2, DES and DTNBP1/dysbindin. Interacts with DMD/dystrophin. Interacts with the calcineurin catalytic subunit PPP3CA. Interacts with TTN. Interacts with CAPN3; this interaction, which results in CMYA5 proteolysis, may protect CAPN3 from autolysis. Interacts with FSD2. In cardiac muscles, identified in a complex composed of FSD2, CMYA5 and RYR2. Phosphorylated by PKA. Expressed in skin as well as in cardiac muscle. Expressed in skeletal muscle (at protein level).

The protein resides in the nucleus. It localises to the cytoplasm. Its subcellular location is the perinuclear region. It is found in the myofibril. The protein localises to the sarcomere. The protein resides in the m line. It localises to the sarcoplasmic reticulum. May serve as an anchoring protein that mediates the subcellular compartmentation of protein kinase A (PKA) via binding to PRKAR2A. May attenuate calcineurin ability to induce slow-fiber gene program in muscle and may negatively modulate skeletal muscle regeneration. Plays a role in the assembly of ryanodine receptor (RYR2) clusters in striated muscle. This Mus musculus (Mouse) protein is Cardiomyopathy-associated protein 5 (Cmya5).